The primary structure comprises 505 residues: ATP synthase subunit alpha (505 aa).

170–177 (GDRQTGKS) lines the ATP pocket.

This sequence belongs to the ATPase alpha/beta chains family. As to quaternary structure, F-type ATPases have 2 components, CF(1) - the catalytic core - and CF(0) - the membrane proton channel. CF(1) has five subunits: alpha(3), beta(3), gamma(1), delta(1), epsilon(1). CF(0) has four main subunits: a(1), b(1), b'(1) and c(9-12).

It is found in the cellular thylakoid membrane. It carries out the reaction ATP + H2O + 4 H(+)(in) = ADP + phosphate + 5 H(+)(out). Its function is as follows. Produces ATP from ADP in the presence of a proton gradient across the membrane. The alpha chain is a regulatory subunit. This chain is ATP synthase subunit alpha, found in Prochlorococcus marinus (strain AS9601).